A 94-amino-acid polypeptide reads, in one-letter code: Large ribosomal subunit protein uL23cz (94 aa).

The protein belongs to the universal ribosomal protein uL23 family. In terms of assembly, part of the 50S ribosomal subunit.

Its subcellular location is the plastid. It localises to the chloroplast. Functionally, binds to 23S rRNA. In Agrostis stolonifera (Creeping bentgrass), this protein is Large ribosomal subunit protein uL23cz (rpl23-A).